The sequence spans 828 residues: Periplasmic nitrate reductase (828 aa).

The tat-type signal signal peptide spans methionine 1 to alanine 31. In terms of domain architecture, 4Fe-4S Mo/W bis-MGD-type spans isoleucine 39–aspartate 95. Cysteine 46, cysteine 49, cysteine 53, and cysteine 81 together coordinate [4Fe-4S] cluster. Mo-bis(molybdopterin guanine dinucleotide)-binding positions include lysine 83, glutamine 150, asparagine 175, cysteine 179, tryptophan 212 to methionine 219, serine 243 to histidine 247, glutamine 262 to aspartate 264, methionine 372, glutamine 376, asparagine 482, serine 508 to aspartate 509, lysine 531, aspartate 558, and threonine 718 to threonine 727. Phenylalanine 794 provides a ligand contact to substrate. Mo-bis(molybdopterin guanine dinucleotide) contacts are provided by asparagine 802 and lysine 819.

The protein belongs to the prokaryotic molybdopterin-containing oxidoreductase family. NasA/NapA/NarB subfamily. In terms of assembly, component of the periplasmic nitrate reductase NapAB complex composed of NapA and NapB. [4Fe-4S] cluster serves as cofactor. Requires Mo-bis(molybdopterin guanine dinucleotide) as cofactor. Predicted to be exported by the Tat system. The position of the signal peptide cleavage has not been experimentally proven.

It localises to the periplasm. The enzyme catalyses 2 Fe(II)-[cytochrome] + nitrate + 2 H(+) = 2 Fe(III)-[cytochrome] + nitrite + H2O. Catalytic subunit of the periplasmic nitrate reductase complex NapAB. Receives electrons from NapB and catalyzes the reduction of nitrate to nitrite. The sequence is that of Periplasmic nitrate reductase from Escherichia coli O1:K1 / APEC.